Here is a 460-residue protein sequence, read N- to C-terminus: DNA repair protein RadA (460 aa).

The segment at 11–28 (CNECGADYPRWQGQCSAC) adopts a C4-type zinc-finger fold. 102 to 109 (GNPGAGKS) contacts ATP. A RadA KNRFG motif motif is present at residues 258–262 (KNRFG). Residues 357-460 (DVFVNVVGGV…ADALSVFDDL (104 aa)) form a lon-protease-like region.

Belongs to the RecA family. RadA subfamily.

Its function is as follows. DNA-dependent ATPase involved in processing of recombination intermediates, plays a role in repairing DNA breaks. Stimulates the branch migration of RecA-mediated strand transfer reactions, allowing the 3' invading strand to extend heteroduplex DNA faster. Binds ssDNA in the presence of ADP but not other nucleotides, has ATPase activity that is stimulated by ssDNA and various branched DNA structures, but inhibited by SSB. Does not have RecA's homology-searching function. This is DNA repair protein RadA from Salmonella typhimurium (strain LT2 / SGSC1412 / ATCC 700720).